We begin with the raw amino-acid sequence, 286 residues long: Phosphatidylserine decarboxylase proenzyme (286 aa).

Active-site charge relay system; for autoendoproteolytic cleavage activity residues include D89, H146, and S252. S252 (schiff-base intermediate with substrate; via pyruvic acid; for decarboxylase activity) is an active-site residue. S252 is subject to Pyruvic acid (Ser); by autocatalysis.

This sequence belongs to the phosphatidylserine decarboxylase family. PSD-B subfamily. Prokaryotic type I sub-subfamily. Heterodimer of a large membrane-associated beta subunit and a small pyruvoyl-containing alpha subunit. The cofactor is pyruvate. Post-translationally, is synthesized initially as an inactive proenzyme. Formation of the active enzyme involves a self-maturation process in which the active site pyruvoyl group is generated from an internal serine residue via an autocatalytic post-translational modification. Two non-identical subunits are generated from the proenzyme in this reaction, and the pyruvate is formed at the N-terminus of the alpha chain, which is derived from the carboxyl end of the proenzyme. The autoendoproteolytic cleavage occurs by a canonical serine protease mechanism, in which the side chain hydroxyl group of the serine supplies its oxygen atom to form the C-terminus of the beta chain, while the remainder of the serine residue undergoes an oxidative deamination to produce ammonia and the pyruvoyl prosthetic group on the alpha chain. During this reaction, the Ser that is part of the protease active site of the proenzyme becomes the pyruvoyl prosthetic group, which constitutes an essential element of the active site of the mature decarboxylase.

It localises to the cell membrane. It carries out the reaction a 1,2-diacyl-sn-glycero-3-phospho-L-serine + H(+) = a 1,2-diacyl-sn-glycero-3-phosphoethanolamine + CO2. The protein operates within phospholipid metabolism; phosphatidylethanolamine biosynthesis; phosphatidylethanolamine from CDP-diacylglycerol: step 2/2. Functionally, catalyzes the formation of phosphatidylethanolamine (PtdEtn) from phosphatidylserine (PtdSer). The polypeptide is Phosphatidylserine decarboxylase proenzyme (Shewanella loihica (strain ATCC BAA-1088 / PV-4)).